The primary structure comprises 216 residues: uncharacterized protein (216 aa).

In terms of domain architecture, Integrase catalytic spans 54–215; sequence TATQPNEKWT…SPVNYRTQSL (162 aa).

It belongs to the transposase IS3/IS150/IS904 family.

This is an uncharacterized protein from Haemophilus influenzae (strain ATCC 51907 / DSM 11121 / KW20 / Rd).